Reading from the N-terminus, the 239-residue chain is Small ribosomal subunit protein uS3c (239 aa).

Residues Ile-43–Lys-139 enclose the KH type-2 domain. Residues Asn-50–Met-74 form a disordered region.

The protein belongs to the universal ribosomal protein uS3 family. Part of the 30S ribosomal subunit.

The protein resides in the plastid. It localises to the chloroplast. This Hordeum vulgare (Barley) protein is Small ribosomal subunit protein uS3c (rps3).